The chain runs to 179 residues: MVQAWYMDDAPGDPRQPHRPDPDRPVGLEQLRRLGVLYWKLDADKYENDPELEKIRRERNYSWMDIITICKDKLPNYEEKIKMFYEEHLHLDDEIRYILDGSGYFDVRDKEDKWIRIFMEKGDMITLPAGIYHRFTVDEKNYAKAMRLFVGEPVWTAYNRPADHFEARGQYMKFLAQTA.

4 residues coordinate Fe(2+): H88, H90, E94, and H133. Positions 88, 90, 94, and 133 each coordinate Ni(2+).

It belongs to the acireductone dioxygenase (ARD) family. In terms of assembly, monomer. Interacts with MMP14. Requires Fe(2+) as cofactor. Ni(2+) serves as cofactor.

The protein resides in the cytoplasm. Its subcellular location is the nucleus. It localises to the cell membrane. It catalyses the reaction 1,2-dihydroxy-5-(methylsulfanyl)pent-1-en-3-one + O2 = 4-methylsulfanyl-2-oxobutanoate + formate + 2 H(+). The enzyme catalyses 1,2-dihydroxy-5-(methylsulfanyl)pent-1-en-3-one + O2 = 3-(methylsulfanyl)propanoate + CO + formate + 2 H(+). It participates in amino-acid biosynthesis; L-methionine biosynthesis via salvage pathway; L-methionine from S-methyl-5-thio-alpha-D-ribose 1-phosphate: step 5/6. Its function is as follows. Catalyzes 2 different reactions between oxygen and the acireductone 1,2-dihydroxy-3-keto-5-methylthiopentene (DHK-MTPene) depending upon the metal bound in the active site. Fe-containing acireductone dioxygenase (Fe-ARD) produces formate and 2-keto-4-methylthiobutyrate (KMTB), the alpha-ketoacid precursor of methionine in the methionine recycle pathway. Ni-containing acireductone dioxygenase (Ni-ARD) produces methylthiopropionate, carbon monoxide and formate, and does not lie on the methionine recycle pathway. Also down-regulates cell migration mediated by MMP14. The polypeptide is Acireductone dioxygenase (Macaca mulatta (Rhesus macaque)).